The sequence spans 43 residues: Potassium channel toxin gamma-KTx 3.3 (43 aa).

Disulfide bonds link Cys5–Cys23, Cys11–Cys34, Cys20–Cys39, and Cys24–Cys41.

Belongs to the ergtoxin family. Gamma-KTx 3 subfamily. As to expression, expressed by the venom gland.

It localises to the secreted. Blocks Kv11/ERG potassium channels. In Centruroides sculpturatus (Arizona bark scorpion), this protein is Potassium channel toxin gamma-KTx 3.3.